Consider the following 749-residue polypeptide: Dynamin-1-like protein (749 aa).

An N-acetylmethionine modification is found at Met1. Residues 22-315 enclose the Dynamin-type G domain; that stretch reads IIQLPQIVVV…LMHHIRDCLP (294 aa). The tract at residues 32–39 is G1 motif; that stretch reads GTQSSGKS. 32 to 40 serves as a coordination point for GTP; that stretch reads GTQSSGKSS. The interval 58 to 60 is G2 motif; the sequence is VTR. Residues 74–93 are disordered; sequence DKRKTTGEENDPATWKNSRH. A G3 motif region spans residues 159 to 162; sequence DLPG. Residues 228–231 form a G4 motif region; the sequence is TKLD. GTP contacts are provided by residues 228 to 234 and 259 to 262; these read TKLDLMD and NRSQ. The interval 258–261 is G5 motif; it reads VNRS. The segment at 357–502 is middle domain; sequence YCNTIEGTAK…NEMVHNLVAI (146 aa). The interaction with GSK3B stretch occupies residues 461 to 698; the sequence is NYSTQELLRF…NHVKDTLQSE (238 aa). Residues 515–582 are b domain; sequence ADACGLMNNN…IQESRRETKN (68 aa). Positions 536-604 are disordered; sequence ELPSAVSRDK…QEPTTGNWRG (69 aa). At Ser542 the chain carries Phosphoserine. Glycyl lysine isopeptide (Lys-Gly) (interchain with G-Cter in SUMO) cross-links involve residues Lys545 and Lys548. Positions 550-567 are enriched in low complexity; that stretch reads PSALAPASQEPSPAASAE. Ser561 carries the phosphoserine modification. Over residues 568 to 581 the composition is skewed to basic and acidic residues; the sequence is ADGKLIQESRRETK. Glycyl lysine isopeptide (Lys-Gly) (interchain with G-Cter in SUMO) cross-links involve residues Lys571 and Lys581. Thr598 and Thr599 each carry an O-linked (GlcNAc) threonine glycan. Lys607 participates in a covalent cross-link: Glycyl lysine isopeptide (Lys-Gly) (interchain with G-Cter in SUMO). At Lys610 the chain carries N6-acetyllysine; alternate. A Glycyl lysine isopeptide (Lys-Gly) (interchain with G-Cter in SUMO); alternate cross-link involves residue Lys610. Lys619 is covalently cross-linked (Glycyl lysine isopeptide (Lys-Gly) (interchain with G-Cter in SUMO)). A Phosphoserine modification is found at Ser620. Residue Lys621 forms a Glycyl lysine isopeptide (Lys-Gly) (interchain with G-Cter in SUMO) linkage. At Ser629 the chain carries Phosphoserine; by CDK1 and PINK1. Ser650 is modified (phosphoserine; by CAMK1 and PKA). An S-nitrosocysteine modification is found at Cys657. In terms of domain architecture, GED spans 657 to 748; the sequence is CEVIERLIKS…IIAEIRETHL (92 aa). The important for homodimerization stretch occupies residues 667–681; the sequence is YFLIVRKNIQDSVPK.

Belongs to the TRAFAC class dynamin-like GTPase superfamily. Dynamin/Fzo/YdjA family. As to quaternary structure, homotetramer; dimerizes through the N-terminal GTP-middle region of one molecule binding to the GED domain of another DNM1L molecule. Oligomerizes in a GTP-dependent manner to form membrane-associated tubules with a spiral pattern. Interacts with GSK3B and MARCHF5. Interacts (via the GTPase and B domains) with UBE2I; the interaction promotes sumoylation of DNM1L, mainly in its B domain. Interacts with PPP3CA; the interaction dephosphorylates DNM1L and regulates its transition to mitochondria. Interacts with BCL2L1 isoform BCL-X(L) and CLTA; DNM1L and BCL2L1 isoform BCL-X(L) may form a complex in synaptic vesicles that also contains clathrin and MFF. Interacts with MFF; the interaction is inhinited by C11orf65/MFI. Interacts with FIS1. Interacts with MIEF2 and MIEF1; GTP-dependent, regulates GTP hydrolysis and DNM1L oligomerization. Interacts with PGAM5; this interaction leads to dephosphorylation at Ser-656 and activation of GTPase activity and eventually to mitochondria fragmentation. Interacts with RALBP1; during mitosis, recruits DNM1L to the mitochondrion and mediates its activation by the mitotic kinase cyclin B-CDK1. In terms of processing, phosphorylation/dephosphorylation events on two sites near the GED domain regulate mitochondrial fission. Phosphorylation on Ser-650 by CAMK1 and PKA inhibits the GTPase activity, leading to a defect in mitochondrial fission promoting mitochondrial elongation. Dephosphorylated on this site by PPP3CA which promotes mitochondrial fission. Phosphorylation on Ser-629 by CDK1 and PINK1 activates the GTPase activity and promotes mitochondrial fission. Phosphorylated in a circadian manner at Ser-650. Sumoylated on various lysine residues within the B domain, probably by MUL1. Sumoylation positively regulates mitochondrial fission. Desumoylated by SENP5 during G2/M transition of mitosis. Appears to be linked to its catalytic activity. Post-translationally, S-nitrosylation increases DNM1L dimerization, mitochondrial fission and causes neuronal damage. In terms of processing, O-GlcNAcylation augments the level of the GTP-bound active form of DNM1L and induces translocation from the cytoplasm to mitochondria in cardiomyocytes. It also decreases phosphorylation at Ser-650. Ubiquitination by MARCHF5 affects mitochondrial morphology.

Its subcellular location is the cytoplasm. It localises to the cytosol. The protein localises to the golgi apparatus. The protein resides in the endomembrane system. It is found in the mitochondrion outer membrane. Its subcellular location is the peroxisome. It localises to the membrane. The protein localises to the clathrin-coated pit. The protein resides in the cytoplasmic vesicle. It is found in the secretory vesicle. Its subcellular location is the synaptic vesicle membrane. It carries out the reaction GTP + H2O = GDP + phosphate + H(+). In terms of biological role, functions in mitochondrial and peroxisomal division. Mediates membrane fission through oligomerization into membrane-associated tubular structures that wrap around the scission site to constrict and sever the mitochondrial membrane through a GTP hydrolysis-dependent mechanism. The specific recruitment at scission sites is mediated by membrane receptors like MFF, MIEF1 and MIEF2 for mitochondrial membranes. While the recruitment by the membrane receptors is GTP-dependent, the following hydrolysis of GTP induces the dissociation from the receptors and allows DNM1L filaments to curl into closed rings that are probably sufficient to sever a double membrane. Acts downstream of PINK1 to promote mitochondrial fission in a PRKN-dependent manner. Plays an important role in mitochondrial fission during mitosis. Through its function in mitochondrial division, ensures the survival of at least some types of postmitotic neurons, including Purkinje cells, by suppressing oxidative damage. Required for normal brain development, including that of cerebellum. Facilitates developmentally regulated apoptosis during neural tube formation. Required for a normal rate of cytochrome c release and caspase activation during apoptosis; this requirement may depend upon the cell type and the physiological apoptotic cues. Required for formation of endocytic vesicles. Proposed to regulate synaptic vesicle membrane dynamics through association with BCL2L1 isoform Bcl-X(L) which stimulates its GTPase activity in synaptic vesicles; the function may require its recruitment by MFF to clathrin-containing vesicles. Required for programmed necrosis execution. Rhythmic control of its activity following phosphorylation at Ser-650 is essential for the circadian control of mitochondrial ATP production. In Bos taurus (Bovine), this protein is Dynamin-1-like protein.